The chain runs to 336 residues: tRNA N6-adenosine threonylcarbamoyltransferase (336 aa).

Residues H111 and H115 each coordinate Fe cation. Substrate is bound by residues 134 to 138 (LVSGG), D167, G180, and N270. Position 298 (D298) interacts with Fe cation.

Belongs to the KAE1 / TsaD family. Requires Fe(2+) as cofactor.

Its subcellular location is the cytoplasm. The catalysed reaction is L-threonylcarbamoyladenylate + adenosine(37) in tRNA = N(6)-L-threonylcarbamoyladenosine(37) in tRNA + AMP + H(+). In terms of biological role, required for the formation of a threonylcarbamoyl group on adenosine at position 37 (t(6)A37) in tRNAs that read codons beginning with adenine. Is involved in the transfer of the threonylcarbamoyl moiety of threonylcarbamoyl-AMP (TC-AMP) to the N6 group of A37, together with TsaE and TsaB. TsaD likely plays a direct catalytic role in this reaction. This chain is tRNA N6-adenosine threonylcarbamoyltransferase, found in Acinetobacter baumannii (strain AB307-0294).